Consider the following 176-residue polypeptide: Inner membrane-spanning protein YciB (176 aa).

Transmembrane regions (helical) follow at residues 22–42, 50–70, 81–101, 121–141, and 149–169; these read IYYA…YTWL, VALI…YYHN, IYSL…KPLI, IAWA…AFWL, and FKVF…GIYI.

The protein belongs to the YciB family.

The protein resides in the cell inner membrane. Functionally, plays a role in cell envelope biogenesis, maintenance of cell envelope integrity and membrane homeostasis. This Sodalis glossinidius (strain morsitans) protein is Inner membrane-spanning protein YciB.